The chain runs to 234 residues: Demethylmenaquinone methyltransferase (234 aa).

S-adenosyl-L-methionine is bound by residues T58, D79, and N106–A107.

Belongs to the class I-like SAM-binding methyltransferase superfamily. MenG/UbiE family.

The enzyme catalyses a 2-demethylmenaquinol + S-adenosyl-L-methionine = a menaquinol + S-adenosyl-L-homocysteine + H(+). The protein operates within quinol/quinone metabolism; menaquinone biosynthesis; menaquinol from 1,4-dihydroxy-2-naphthoate: step 2/2. Methyltransferase required for the conversion of demethylmenaquinol (DMKH2) to menaquinol (MKH2). In Geobacillus kaustophilus (strain HTA426), this protein is Demethylmenaquinone methyltransferase.